A 149-amino-acid polypeptide reads, in one-letter code: SsrA-binding protein (149 aa).

Belongs to the SmpB family.

The protein localises to the cytoplasm. In terms of biological role, required for rescue of stalled ribosomes mediated by trans-translation. Binds to transfer-messenger RNA (tmRNA), required for stable association of tmRNA with ribosomes. tmRNA and SmpB together mimic tRNA shape, replacing the anticodon stem-loop with SmpB. tmRNA is encoded by the ssrA gene; the 2 termini fold to resemble tRNA(Ala) and it encodes a 'tag peptide', a short internal open reading frame. During trans-translation Ala-aminoacylated tmRNA acts like a tRNA, entering the A-site of stalled ribosomes, displacing the stalled mRNA. The ribosome then switches to translate the ORF on the tmRNA; the nascent peptide is terminated with the 'tag peptide' encoded by the tmRNA and targeted for degradation. The ribosome is freed to recommence translation, which seems to be the essential function of trans-translation. The polypeptide is SsrA-binding protein (Mesoplasma florum (strain ATCC 33453 / NBRC 100688 / NCTC 11704 / L1) (Acholeplasma florum)).